We begin with the raw amino-acid sequence, 191 residues long: Putative acetyltransferase DDB_G0280825 (191 aa).

Belongs to the transferase hexapeptide repeat family.

The sequence is that of Putative acetyltransferase DDB_G0280825 from Dictyostelium discoideum (Social amoeba).